A 207-amino-acid chain; its full sequence is Ribosomal RNA large subunit methyltransferase E (207 aa).

Residues glycine 60, tryptophan 62, aspartate 80, aspartate 96, and aspartate 121 each contribute to the S-adenosyl-L-methionine site. The active-site Proton acceptor is the lysine 161.

It belongs to the class I-like SAM-binding methyltransferase superfamily. RNA methyltransferase RlmE family.

The protein localises to the cytoplasm. It carries out the reaction uridine(2552) in 23S rRNA + S-adenosyl-L-methionine = 2'-O-methyluridine(2552) in 23S rRNA + S-adenosyl-L-homocysteine + H(+). Its function is as follows. Specifically methylates the uridine in position 2552 of 23S rRNA at the 2'-O position of the ribose in the fully assembled 50S ribosomal subunit. The chain is Ribosomal RNA large subunit methyltransferase E from Pseudomonas aeruginosa (strain UCBPP-PA14).